Consider the following 618-residue polypeptide: Ubiquitin carboxyl-terminal hydrolase 2 (618 aa).

Positions 1-213 are necessary for interaction with MDM4; the sequence is MSQLSSTLKR…RSEYLTDYLE (213 aa). Disordered stretches follow at residues 54 to 112 and 246 to 274; these read VSPT…GGSG and RYTL…MNSK. The segment covering 90–100 has biased composition (basic and acidic residues); sequence KRSESQTRGNE. The span at 255–274 shows a compositional bias: polar residues; that stretch reads GQASGPSRSTSPGRDTMNSK. In terms of domain architecture, USP spans 280 to 612; it reads AGLRNLGNTC…DAYLLFYELA (333 aa). Cys-289 acts as the Nucleophile in catalysis. The necessary for interaction with MDM4 stretch occupies residues 416-516; sequence YLEREDSRIG…FPKILVLHLK (101 aa). Zn(2+)-binding residues include Cys-438, Cys-441, Cys-489, and Cys-492. The active-site Proton acceptor is His-570.

It belongs to the peptidase C19 family. USP2 subfamily. As to quaternary structure, homooligomer. Found in trimeric complex with MDM2 and MDM4 and USP2. Interacts with CCND1; the interaction is direct and promotes its stabilization by antagonizing ubiquitin-dependent degradation. Interacts (via N-terminus and C-terminus) with MDM2. Interacts with MDM4. Interacts with PER1. Interacts with KCNQ1; counteracts the NEDD4L-specific down-regulation of I(Ks) and restores plasma membrane localization of KCNQ1. Isoform 4: Interacts with NHERF4 and CLTC. In terms of tissue distribution, expressed in mesangial cells of the kidney. Isoform 1 and isoform 2 are expressed in elongated spermatids; the shorter form appearing earlier than the longer form (at protein level). Isoform 1 and isoform 2 are expressed in early round spermatids of the testis. Isoform 1 is expressed in muscle and heart. Isoform 2 is expressed in muscle, lung, heart, brain, liver and ovary. During muscle differentiation, isoform 1 expression increases before the onset of membrane fusion and decreases as the myogenic processes proceeded; un counterpart, isoform 2 expression remains low until the burst of membrane fusion but increases thereafter.

Its subcellular location is the cytoplasm. It is found in the perinuclear region. The protein resides in the nucleus. It localises to the membrane. The enzyme catalyses Thiol-dependent hydrolysis of ester, thioester, amide, peptide and isopeptide bonds formed by the C-terminal Gly of ubiquitin (a 76-residue protein attached to proteins as an intracellular targeting signal).. Its activity is regulated as follows. Cleavage is inhibited by ubiquitin in a dosage-dependent manner. Cleavage is blocked by ubiquitin aldehyde. Hydrolase that deubiquitinates polyubiquitinated target proteins such as MDM2, MDM4 and CCND1. Isoform 1 and isoform 2 possess both ubiquitin-specific peptidase and isopeptidase activities. Deubiquitinates MDM2 without reversing MDM2-mediated p53/TP53 ubiquitination and thus indirectly promotes p53/TP53 degradation and limits p53 activity. Has no deubiquitinase activity against p53/TP53. Prevents MDM2-mediated degradation of MDM4. Plays a role in the G1/S cell-cycle progression in normal and cancer cells. Regulates the circadian clock by modulating its intrinsic circadian rhythm and its capacity to respond to external cues. Associates with clock proteins and deubiquitinates core clock component PER1 but does not affect its overall stability. Regulates the nucleocytoplasmic shuttling and nuclear retention of PER1 and its repressive role on the clock transcription factors CLOCK and BMAL1. Plays a role in the regulation of myogenic differentiation of embryonic muscle cells. Functionally, circadian clock output effector that regulates Ca(2+) absorption in the small intestine. Probably functions by regulating protein levels of the membrane scaffold protein NHERF4 in a rhythmic manner, and is therefore likely to control Ca(2+) membrane permeability mediated by the Ca(2+) channel TRPV6 in the intestine. The polypeptide is Ubiquitin carboxyl-terminal hydrolase 2 (Usp2) (Rattus norvegicus (Rat)).